Reading from the N-terminus, the 876-residue chain is MMADGAAAGAGGSPSLRELRARMVAAANEIAKERRKQDVVNRVATHSSNIRSTFKPVIDGSMLKNDIKQRLARERREEKRRQQDANKETQLLEKERKTKLQYEKQMEERQRKLKERKEKEEQRRIAAEEKRHQKDEAQKEKFTAILYRTLERRRLADDYQQKRWSWGGSAMANSESKTANKRSASTEKLEQGTSALIRQMPLSSAGLQNSVAKRKTDKERSSSLNRRDSNLHSSTDKEQAERKPRVTGVTNYVMQYVTVPLRKCTSDELRAVMFPMSTMKIPPQTKVEESPLEKVETPPKASVDAPPQVNVEVFCNTSMEASPKAGVGMAPEVSTDSFPVVSVDVSPVVSTYDSEMSMDASPELSIEALPKVDLETVPKVSIVASPEASLEAPPEVSLEALPEVSVEAAPEGSLEAPPKGSAEVAPKESVKGSPKESMEASPEAMVKASPKTSLEASMEASPKAKARDAPKKSEMDKQALIPIAKKRLSSYTECYKWSSSPENACGLPSPISTNRQIQKNCPPSPLPLISKQSPQTSFPYKIMPIQHTLSVQSASSTVKKKKETVSKTTNRCEALSQRHMIYEESGNKSTAGIMNAEAATKILTELRRLAREQREKEEEERQREEMQQRVIKKSKDMAKEAVGGQAEDHLKLKDGQQQNETKKKKGWLDQEDQEAPLQKGDAKIKAQEEADKRKKEHERIMLQNLQERLERKKRIEEIMKRTRKTDVNASKVTETSSHDIYEEAEADNEESDKDSLNEMFPSAILNGTGSPTKFKMPFNNAKKMTHKLVFLEDGTSQVRKEPKTYFNGDLKNFRQKSMKDTSIQEVVSRPSSKRMTSHTTKTRKADETNTTSRSSAQTKSEGFHDILPKSSDTFRQ.

Met1 is modified (N-acetylmethionine). Positions 65–144 form a coiled coil; that stretch reads NDIKQRLARE…DEAQKEKFTA (80 aa). Disordered stretches follow at residues 72–137 and 170–246; these read ARER…KDEA and AMAN…KPRV. The span at 171–183 shows a compositional bias: polar residues; the sequence is MANSESKTANKRS. Position 185 is a phosphoserine (Ser185). Residues 191-211 are compositionally biased toward polar residues; sequence QGTSALIRQMPLSSAGLQNSV. The span at 214–244 shows a compositional bias: basic and acidic residues; that stretch reads RKTDKERSSSLNRRDSNLHSSTDKEQAERKP. Ser322 bears the Phosphoserine mark. The interval 407–475 is disordered; sequence EAAPEGSLEA…ARDAPKKSEM (69 aa). The span at 425–438 shows a compositional bias: basic and acidic residues; it reads APKESVKGSPKESM. Phosphoserine occurs at positions 441, 457, and 461. Over residues 465 to 475 the composition is skewed to basic and acidic residues; that stretch reads KARDAPKKSEM. The residue at position 490 (Ser490) is a Phosphoserine. Disordered stretches follow at residues 509–533, 613–697, and 723–754; these read SPIS…SKQS, QREK…KKEH, and RKTD…SDKD. Over residues 510–521 the composition is skewed to polar residues; it reads PISTNRQIQKNC. Ser524 is subject to Phosphoserine. Coiled coils occupy residues 558 to 640 and 689 to 724; these read VKKK…MAKE and EADK…RTRK. Basic and acidic residues-rich tracts occupy residues 613–639 and 680–697; these read QREK…DMAK and GDAK…KKEH. Over residues 742 to 752 the composition is skewed to acidic residues; it reads EEAEADNEESD. Residues Ser770 and Ser817 each carry the phosphoserine modification. The tract at residues 802–876 is disordered; sequence PKTYFNGDLK…LPKSSDTFRQ (75 aa). The segment covering 820–830 has biased composition (polar residues); that stretch reads DTSIQEVVSRP. Positions 831–842 are enriched in basic residues; it reads SSKRMTSHTTKT. Ser832 bears the Phosphoserine mark. Positions 848–860 are enriched in polar residues; that stretch reads TNTTSRSSAQTKS. Positions 861–876 are enriched in basic and acidic residues; the sequence is EGFHDILPKSSDTFRQ.

Belongs to the MAP7 family. As to quaternary structure, interacts (via N-terminus coiled coil domains) with tubulin and microtubules.

It localises to the cytoplasm. The protein localises to the cytoskeleton. It is found in the spindle. Its function is as follows. Promotes the assembly and stability of microtubules. This chain is MAP7 domain-containing protein 3 (MAP7D3), found in Homo sapiens (Human).